A 221-amino-acid chain; its full sequence is 7-cyano-7-deazaguanine synthase (221 aa).

8–18 (LSGGMDSAAVI) contributes to the ATP binding site. Zn(2+)-binding residues include cysteine 186, cysteine 196, cysteine 199, and cysteine 202.

This sequence belongs to the QueC family. Zn(2+) serves as cofactor.

It catalyses the reaction 7-carboxy-7-deazaguanine + NH4(+) + ATP = 7-cyano-7-deazaguanine + ADP + phosphate + H2O + H(+). It functions in the pathway purine metabolism; 7-cyano-7-deazaguanine biosynthesis. In terms of biological role, catalyzes the ATP-dependent conversion of 7-carboxy-7-deazaguanine (CDG) to 7-cyano-7-deazaguanine (preQ(0)). This is 7-cyano-7-deazaguanine synthase from Stenotrophomonas maltophilia (strain R551-3).